A 476-amino-acid chain; its full sequence is Salicylate biosynthesis isochorismate synthase (476 aa).

The interval 181–202 (RRRPSGPTAGAQGDASAQERRQ) is disordered.

It belongs to the isochorismate synthase family.

It catalyses the reaction chorismate = isochorismate. It participates in siderophore biosynthesis; salicylate biosynthesis. Involved in the conversion of chorismate to salicylate. The sequence is that of Salicylate biosynthesis isochorismate synthase (pchA) from Pseudomonas aeruginosa (strain ATCC 15692 / DSM 22644 / CIP 104116 / JCM 14847 / LMG 12228 / 1C / PRS 101 / PAO1).